Consider the following 346-residue polypeptide: Probable WRKY transcription factor 54 (346 aa).

The disordered stretch occupies residues 109–130; that stretch reads PVSCNGGDSGESKKKRLGVGKG. Positions 121–130 are enriched in basic residues; it reads KKKRLGVGKG. Positions 146-214 form a DNA-binding region, WRKY; that stretch reads VEAKSSEDRY…YIGYHTCTAN (69 aa). The span at 267–282 shows a compositional bias: basic and acidic residues; it reads VKEEQNNNGDQSKDYY. The disordered stretch occupies residues 267-286; that stretch reads VKEEQNNNGDQSKDYYEGSS.

It belongs to the WRKY group III family. As to quaternary structure, interacts with WRKY30. Binds to BZR2/BES1 to cooperatively regulate the expression of target genes. Interacts with ASK7/BIN2. In terms of processing, phosphorylated and destabilized by ASK7/BIN2. As to expression, expressed in leaves.

The protein localises to the nucleus. Transcription factor. Interacts specifically with the W box (5'-(T)TGAC[CT]-3'), a frequently occurring elicitor-responsive cis-acting element. Together with WRKY70, negative regulator of developmental senescence, probably via the regulation of several senescence-associated markers genes. Positive regulator of EDS1-dependent defense against E.amylovora. In collaboration with WRKY70, prevents stomatal closure and, consequently, osmotic stress tolerance. Together with WRKY46 and WRKY70, promotes brassinosteroid (BR)-regulated plant growth but prevent drought response by modulating gene expression. Negative regulator of SA biosynthesis. Prevents defense response to the necrotrophic pathogens P.carotovorum and B.cinerea, but promotes defense against biotrophic/hemibiotrophic pathogens P.syringae pv. tomato (Pst) DC3000, probably by regulating negatively the jasmonic acid (JA)/ethylene (ET) and positively the salicylic acid (SA) signaling pathways. This Arabidopsis thaliana (Mouse-ear cress) protein is Probable WRKY transcription factor 54.